Here is a 383-residue protein sequence, read N- to C-terminus: Na(+)/H(+) antiporter NhaA (383 aa).

Helical transmembrane passes span 10 to 30, 56 to 76, 91 to 111, 121 to 141, 150 to 170, 174 to 194, 206 to 226, 254 to 274, 289 to 308, 327 to 347, and 355 to 375; these read LIGGLILFSAALLAIVVNNSP, LMHWINDGLMAIYFLYIGLEI, IITPAIAAFAGLAMPSLIYLS, GWAIPSATDIAFTLGILALLG, LLVITIAIFDDIAAIAIIAIF, SLSLLSLSLGTLFILAMIICN, VVLGFFAWFCTIKSGVHATLA, PWIIYFILPVFAFANAGISFS, IIWGLFVGKQLGIFSILAVF, GISLLCGIGFTMSLFIGVLAF, and AIKIGVVVGSVLSGFFGYIVL.

It belongs to the NhaA Na(+)/H(+) (TC 2.A.33) antiporter family.

It localises to the cell inner membrane. The catalysed reaction is Na(+)(in) + 2 H(+)(out) = Na(+)(out) + 2 H(+)(in). Functionally, na(+)/H(+) antiporter that extrudes sodium in exchange for external protons. This chain is Na(+)/H(+) antiporter NhaA, found in Francisella tularensis subsp. holarctica (strain FTNF002-00 / FTA).